A 321-amino-acid polypeptide reads, in one-letter code: Lipoyl synthase (321 aa).

Residues C68, C73, C79, C94, C98, C101, and S308 each coordinate [4Fe-4S] cluster. In terms of domain architecture, Radical SAM core spans 80-297 (FNHGTATFMI…KAEAMAMGFT (218 aa)).

It belongs to the radical SAM superfamily. Lipoyl synthase family. The cofactor is [4Fe-4S] cluster.

It localises to the cytoplasm. The enzyme catalyses [[Fe-S] cluster scaffold protein carrying a second [4Fe-4S](2+) cluster] + N(6)-octanoyl-L-lysyl-[protein] + 2 oxidized [2Fe-2S]-[ferredoxin] + 2 S-adenosyl-L-methionine + 4 H(+) = [[Fe-S] cluster scaffold protein] + N(6)-[(R)-dihydrolipoyl]-L-lysyl-[protein] + 4 Fe(3+) + 2 hydrogen sulfide + 2 5'-deoxyadenosine + 2 L-methionine + 2 reduced [2Fe-2S]-[ferredoxin]. The protein operates within protein modification; protein lipoylation via endogenous pathway; protein N(6)-(lipoyl)lysine from octanoyl-[acyl-carrier-protein]: step 2/2. Its function is as follows. Catalyzes the radical-mediated insertion of two sulfur atoms into the C-6 and C-8 positions of the octanoyl moiety bound to the lipoyl domains of lipoate-dependent enzymes, thereby converting the octanoylated domains into lipoylated derivatives. The polypeptide is Lipoyl synthase (Enterobacter sp. (strain 638)).